A 498-amino-acid polypeptide reads, in one-letter code: Minor fimbrium subunit Mfa1 (498 aa).

The N-terminal stretch at 1-19 (MKLNKMFLVGALLSLGFAS) is a signal peptide. Residue Cys20 is the site of N-palmitoyl cysteine attachment. Cys20 carries S-diacylglycerol cysteine lipidation. A propeptide spanning residues 20-50 (CSKEGNGPAPDSSSTADTHMSVSMSLPQHNR) is cleaved from the precursor. The tract at residues 436 to 476 (SGNPFVPTDPDPNNPDTPDNPDTPDPEDPDTPNPEEPLPVQ) is disordered.

The protein belongs to the bacteroidetes fimbrillin superfamily. FimA/Mfa1 family. In terms of assembly, structural component of the fimbrial stalk. Minor fimbriae are composed of a structural subunit, such as the 53 kDa fimbrillin, and the accessory subunits Mfa3, Mfa4 and Mfa5. Fimbrium assembly occurs by linear, head-to-tail oligomerization of fimbrial subunits. This is mediated via insertion of a C-terminal beta-strand from one subunit into a groove in the N-terminal domain of the following subunit.

It is found in the fimbrium. The protein resides in the cell outer membrane. In terms of biological role, structural subunit of the minor fimbriae. These filamentous pili are attached to the cell surface; they mediate biofilm formation, adhesion onto host cells and onto other bacteria that are part of the oral microbiome. They play an important role in invasion of periodontal tissues and are recognized as major virulence factors. Mfa1 orthologs from different strains have highly divergent sequences, and this correlates with pathogenicity. The polypeptide is Minor fimbrium subunit Mfa1 (Porphyromonas gingivalis (Bacteroides gingivalis)).